We begin with the raw amino-acid sequence, 87 residues long: Small ribosomal subunit protein uS17 (87 aa).

The protein belongs to the universal ribosomal protein uS17 family. Part of the 30S ribosomal subunit.

Its function is as follows. One of the primary rRNA binding proteins, it binds specifically to the 5'-end of 16S ribosomal RNA. This chain is Small ribosomal subunit protein uS17, found in Staphylococcus haemolyticus (strain JCSC1435).